A 2620-amino-acid chain; its full sequence is Highly reducing polyketide synthase tazB (2620 aa).

Residues 1–22 (MPFLNGNTTHHEAHSAEPDHGN) are disordered. Positions 1–416 (MPFLNGNTTH…GTNAHCILDD (416 aa)) constitute a Ketosynthase family 3 (KS3) domain. A compositionally biased stretch (basic and acidic residues) spans 9 to 22 (THHEAHSAEPDHGN). Active-site for beta-ketoacyl synthase activity residues include Cys-166, His-301, and His-340. Residues 460 to 481 (GFNKFDEPRGSDSAGSNANGSH) form a disordered region. The span at 470–481 (SDSAGSNANGSH) shows a compositional bias: low complexity. Residues 601–923 (VFTGQGAQYA…PYLATLSRKD (323 aa)) form a malonyl-CoA:ACP transacylase (MAT) domain region. Residues 993–1128 (HDLFGAPVPD…GEVSPDLKKS (136 aa)) are N-terminal hotdog fold. Residues 993-1313 (HDLFGAPVPD…LAGIRLSPFK (321 aa)) form a dehydratase (DH) domain region. The region spanning 993–1318 (HDLFGAPVPD…LSPFKPESSE (326 aa)) is the PKS/mFAS DH domain. His-1025 acts as the Proton acceptor; for dehydratase activity in catalysis. A C-terminal hotdog fold region spans residues 1157-1318 (TAPVDFTPVY…LSPFKPESSE (162 aa)). The active-site Proton donor; for dehydratase activity is the Asp-1225. The methyltransferase (CMet) domain stretch occupies residues 1379–1680 (GLRESREMKD…VDFEASSSIY (302 aa)). The tract at residues 1910-2227 (GIDSLTWVTD…TGKSIGKVTL (318 aa)) is enoyl reductase (ER) domain. Residues 2251-2425 (SFILAGGLGG…HGASVNLGAV (175 aa)) form a ketoreductase (KR) domain region. The Carrier domain maps to 2539–2620 (EAARIIHKAL…VSLSSFTKFR (82 aa)). Ser-2576 bears the O-(pantetheine 4'-phosphoryl)serine mark.

Its pathway is secondary metabolite biosynthesis. In terms of biological role, highly reducing polyketide synthase; part of the gene cluster that mediates the biosynthesis of azaterrilone A and other azaphilones, a class of fungal metabolites characterized by a highly oxygenated pyrano-quinone bicyclic core and exhibiting a broad range of bioactivities. The first step of the pathway begins with the non-reducing polyketide synthase tazA that assembles one acetyl-CoA starter unit, five malonyl-CoA units, and catalyzes a series of Claisen condensations, methylation, PT-mediated cyclization, and finally releases the first hexaketide precursor through the R-domain. The tazA product then undergoes reduction on its terminal ketone and the following pyran-ring formation by yet undetermined enzyme(s). Dehydration and enoyl reduction, possibly involving the trans-enoyl reductase tazE leads to the next intermediate. TazD is predicted as an acetyltransferase and might catalyze the acetylation steps leading to the synthesis of azaterrilone A. Azaterrilone A is not the final product of the taz pathway and both the highly reducing polyketide synthase tazB and the dual enzyme tazHJ catalyze late steps of the pathway, leading to the production of the 2 final stereoisomers that contain additional polyketide modification whose structures have still to be determined. This Aspergillus terreus (strain NIH 2624 / FGSC A1156) protein is Highly reducing polyketide synthase tazB.